A 513-amino-acid polypeptide reads, in one-letter code: Histidine ammonia-lyase (513 aa).

The 5-imidazolinone (Ala-Gly) cross-link spans 142-144; that stretch reads ASG. The residue at position 143 (serine 143) is a 2,3-didehydroalanine (Ser).

The protein belongs to the PAL/histidase family. Contains an active site 4-methylidene-imidazol-5-one (MIO), which is formed autocatalytically by cyclization and dehydration of residues Ala-Ser-Gly.

Its subcellular location is the cytoplasm. The catalysed reaction is L-histidine = trans-urocanate + NH4(+). The protein operates within amino-acid degradation; L-histidine degradation into L-glutamate; N-formimidoyl-L-glutamate from L-histidine: step 1/3. The polypeptide is Histidine ammonia-lyase (Mesorhizobium japonicum (strain LMG 29417 / CECT 9101 / MAFF 303099) (Mesorhizobium loti (strain MAFF 303099))).